A 445-amino-acid polypeptide reads, in one-letter code: Trigger factor (445 aa).

The region spanning 162–247 (GDQVTIDAIG…IKAVHTAEPT (86 aa)) is the PPIase FKBP-type domain.

Belongs to the FKBP-type PPIase family. Tig subfamily.

It is found in the cytoplasm. The enzyme catalyses [protein]-peptidylproline (omega=180) = [protein]-peptidylproline (omega=0). Functionally, involved in protein export. Acts as a chaperone by maintaining the newly synthesized protein in an open conformation. Functions as a peptidyl-prolyl cis-trans isomerase. This Rickettsia prowazekii (strain Madrid E) protein is Trigger factor (tig).